A 58-amino-acid polypeptide reads, in one-letter code: Histatherin (58 aa).

The N-terminal stretch at 1 to 19 (MKIFIFIFIMALILAMIRA) is a signal peptide.

The protein belongs to the histatin/statherin family. In terms of tissue distribution, expressed in mammary glands.

The protein resides in the secreted. The polypeptide is Histatherin (Bos taurus (Bovine)).